Here is a 173-residue protein sequence, read N- to C-terminus: Putative metal-dependent hydrolase BCG9842_B2589 (173 aa).

Residues histidine 65, histidine 156, and histidine 160 each coordinate Zn(2+).

Belongs to the metal hydrolase YfiT family. In terms of assembly, homodimer. The cofactor is Zn(2+).

It localises to the cytoplasm. Possible metal-dependent hydrolase. In Bacillus cereus (strain G9842), this protein is Putative metal-dependent hydrolase BCG9842_B2589.